A 74-amino-acid polypeptide reads, in one-letter code: Cell division protein ZapB (74 aa).

A coiled-coil region spans residues 2-74 (TLDLLEQLES…LVGKIEETES (73 aa)).

Belongs to the ZapB family. Homodimer. The ends of the coiled-coil dimer bind to each other, forming polymers. Interacts with FtsZ.

The protein resides in the cytoplasm. Its function is as follows. Non-essential, abundant cell division factor that is required for proper Z-ring formation. It is recruited early to the divisome by direct interaction with FtsZ, stimulating Z-ring assembly and thereby promoting cell division earlier in the cell cycle. Its recruitment to the Z-ring requires functional FtsA or ZipA. The chain is Cell division protein ZapB from Psychromonas ingrahamii (strain DSM 17664 / CCUG 51855 / 37).